A 216-amino-acid polypeptide reads, in one-letter code: Imidazole glycerol phosphate synthase subunit HisH (216 aa).

Positions 2 to 216 (RVAIIDYGSG…LISNFLRWKP (215 aa)) constitute a Glutamine amidotransferase type-1 domain. Catalysis depends on Cys-88, which acts as the Nucleophile. Active-site residues include His-196 and Glu-198.

Heterodimer of HisH and HisF.

It is found in the cytoplasm. The catalysed reaction is 5-[(5-phospho-1-deoxy-D-ribulos-1-ylimino)methylamino]-1-(5-phospho-beta-D-ribosyl)imidazole-4-carboxamide + L-glutamine = D-erythro-1-(imidazol-4-yl)glycerol 3-phosphate + 5-amino-1-(5-phospho-beta-D-ribosyl)imidazole-4-carboxamide + L-glutamate + H(+). The enzyme catalyses L-glutamine + H2O = L-glutamate + NH4(+). Its pathway is amino-acid biosynthesis; L-histidine biosynthesis; L-histidine from 5-phospho-alpha-D-ribose 1-diphosphate: step 5/9. IGPS catalyzes the conversion of PRFAR and glutamine to IGP, AICAR and glutamate. The HisH subunit catalyzes the hydrolysis of glutamine to glutamate and ammonia as part of the synthesis of IGP and AICAR. The resulting ammonia molecule is channeled to the active site of HisF. This Rhizobium meliloti (strain 1021) (Ensifer meliloti) protein is Imidazole glycerol phosphate synthase subunit HisH.